A 93-amino-acid polypeptide reads, in one-letter code: Beta-defensin 128 (93 aa).

A signal peptide spans 1–18; it reads MKLFLVLIILLFEVLTDG. Cystine bridges form between C24-C52, C32-C46, and C36-C53.

The protein belongs to the beta-defensin family.

The protein localises to the secreted. Has antibacterial activity. This chain is Beta-defensin 128 (DEFB128), found in Pongo pygmaeus (Bornean orangutan).